Consider the following 220-residue polypeptide: Vesicle-associated membrane protein 7 (220 aa).

A2 carries the post-translational modification N-acetylalanine. Over 2–188 (AILFAVVARG…ARAMCVKNVK (187 aa)) the chain is Cytoplasmic. Residues 7-110 (VVARGTTILA…AMNSEFSSVL (104 aa)) form the Longin domain. In terms of domain architecture, v-SNARE coiled-coil homology spans 125-185 (RVTETQAQVD…RNLARAMCVK (61 aa)). 2 positions are modified to phosphoserine: S167 and S168. A helical; Anchor for type IV membrane protein transmembrane segment spans residues 189–209 (LTAIIVVVSIVFIYIIVSPLC). Topologically, residues 210 to 220 (GGFTWPSCVKK) are vesicular.

Belongs to the synaptobrevin family. In terms of assembly, may interact with STX17. Component of the SNARE complex composed of STX4, SNAP23 and VAMP7 that binds SYT7 during lysosomal exocytosis. Component of the SNARE complex composed of STX7, STX8, VAMP7 and VTI1B that is required for heterotypic fusion of late endosomes with lysosomes. Interacts with PICALM. Interacts with RAB21. In terms of tissue distribution, expressed in brain, kidney, liver, lung, spleen and thymus. Not expressed in heart and skeletal muscle.

Its subcellular location is the cytoplasmic vesicle. It is found in the secretory vesicle membrane. The protein resides in the golgi apparatus. It localises to the trans-Golgi network membrane. The protein localises to the late endosome membrane. Its subcellular location is the lysosome membrane. It is found in the endoplasmic reticulum membrane. The protein resides in the phagosome membrane. It localises to the synapse. The protein localises to the synaptosome. Its function is as follows. Involved in the targeting and/or fusion of transport vesicles to their target membrane during transport of proteins from the early endosome to the lysosome. Required for heterotypic fusion of late endosomes with lysosomes and homotypic lysosomal fusion. Required for calcium regulated lysosomal exocytosis. Involved in the export of chylomicrons from the endoplasmic reticulum to the cis Golgi. Required for exocytosis of mediators during eosinophil and neutrophil degranulation, and target cell killing by natural killer cells. Required for focal exocytosis of late endocytic vesicles during phagosome formation. The chain is Vesicle-associated membrane protein 7 (Vamp7) from Rattus norvegicus (Rat).